The following is a 156-amino-acid chain: Organelle RRM domain-containing protein 2, mitochondrial (156 aa).

The N-terminal 28 residues, 1–28 (MAMAMRLPAISRAVTEVASAPVGLRRLF), are a transit peptide targeting the mitochondrion. Residues 56-134 (TNLFVSGLSK…WVIFAEYARP (79 aa)) form the RRM domain. S64 is modified (phosphoserine). Positions 137–148 (QSQSYQPQNNMS) are enriched in polar residues. The interval 137–156 (QSQSYQPQNNMSRPPYYGNR) is disordered.

Interacts with RBG3/ORRM3. Binds to RBG2/ORRM5.

Its subcellular location is the mitochondrion. Involved in C-to-U editing of mitochondrial RNA. Functions as minor mitochondrial editing factor. Controls 6 percent of the mitochondrial editing sites. The chain is Organelle RRM domain-containing protein 2, mitochondrial from Arabidopsis thaliana (Mouse-ear cress).